A 730-amino-acid chain; its full sequence is Stonin-1 (730 aa).

3 disordered regions span residues 1–26 (MYST…KRKD), 38–83 (NGLK…PLST), and 132–159 (SPHV…AGPQ). Composition is skewed to low complexity over residues 54–65 (PSSASSTPLSSP) and 132–143 (SPHVSLPSSHSH). Positions 269–402 (GWSFMLRIPE…KLPATAKPKN (134 aa)) constitute an SHD domain. An MHD domain is found at 407-710 (EQEICLDIQD…ACYNIQVEIE (304 aa)).

Belongs to the Stoned B family.

Its subcellular location is the cytoplasm. It localises to the membrane. Functionally, may be involved in the endocytic machinery. The polypeptide is Stonin-1 (Ston1) (Mus musculus (Mouse)).